We begin with the raw amino-acid sequence, 144 residues long: Large ribosomal subunit protein uL16 (144 aa).

Residues 1–16 (MLVPKRVKHRKVQRGH) show a composition bias toward basic residues. The segment at 1-20 (MLVPKRVKHRKVQRGHMRGE) is disordered.

It belongs to the universal ribosomal protein uL16 family. As to quaternary structure, part of the 50S ribosomal subunit.

Functionally, binds 23S rRNA and is also seen to make contacts with the A and possibly P site tRNAs. This is Large ribosomal subunit protein uL16 from Limosilactobacillus reuteri (strain DSM 20016) (Lactobacillus reuteri).